Consider the following 233-residue polypeptide: Large ribosomal subunit protein uL1 (233 aa).

This sequence belongs to the universal ribosomal protein uL1 family. In terms of assembly, part of the 50S ribosomal subunit.

Functionally, binds directly to 23S rRNA. The L1 stalk is quite mobile in the ribosome, and is involved in E site tRNA release. Protein L1 is also a translational repressor protein, it controls the translation of the L11 operon by binding to its mRNA. This Shewanella baltica (strain OS185) protein is Large ribosomal subunit protein uL1.